Reading from the N-terminus, the 491-residue chain is UDP-N-acetylmuramate--L-alanine ligase (491 aa).

126–132 (GTHGKTT) is an ATP binding site.

Belongs to the MurCDEF family.

It localises to the cytoplasm. The enzyme catalyses UDP-N-acetyl-alpha-D-muramate + L-alanine + ATP = UDP-N-acetyl-alpha-D-muramoyl-L-alanine + ADP + phosphate + H(+). It functions in the pathway cell wall biogenesis; peptidoglycan biosynthesis. In terms of biological role, cell wall formation. This chain is UDP-N-acetylmuramate--L-alanine ligase, found in Escherichia coli O1:K1 / APEC.